A 105-amino-acid chain; its full sequence is Guanidinium exporter (105 aa).

Residues 1–21 traverse the membrane as a helical segment; that stretch reads MSWIILLIAGLLEVVWAVGLK. At 22–28 the chain is on the cytoplasmic side; sequence YTHGFSR. The helical transmembrane segment at 29-49 threads the bilayer; the sequence is LTPSIITITAMVISMALLSWA. The Periplasmic portion of the chain corresponds to 50–57; the sequence is MKTLPVGT. The chain crosses the membrane as a helical span at residues 58–78; that stretch reads AYAIWTGIGAVGAAITGILLL. The Cytoplasmic segment spans residues 79-81; that stretch reads GES. Residues 82-102 form a helical membrane-spanning segment; that stretch reads ASPARLLSLGLIVAGIIGLKL. Residues 103 to 105 are Periplasmic-facing; it reads SAH.

Belongs to the drug/metabolite transporter (DMT) superfamily. Small multidrug resistance (SMR) (TC 2.A.7.1) family. Gdx/SugE subfamily.

The protein resides in the cell inner membrane. Its function is as follows. Guanidinium ion exporter. Couples guanidinium export to the proton motive force, exchanging one guanidinium ion for two protons. This chain is Guanidinium exporter, found in Salmonella typhi.